The sequence spans 33 residues: MSDINATRLPIWGIGCNPCVGDDVTSVLTRGEA.

Positions 1-10 (MSDINATRLP) are excised as a propeptide. Ile11 bears the (3R,4R)-4,5-dihydroxyisoleucine; in form alpha-amanitin mark. At Ile11 the chain carries (3R,4S)-4-hydroxyisoleucine; in form gamma-amanitin. Residues 11–18 (IWGIGCNP) constitute a cross-link (cyclopeptide (Ile-Pro)). The segment at residues 12–16 (WGIGC) is a cross-link (2'-cysteinyl-6'-hydroxytryptophan sulfoxide (Trp-Cys)). Pro18 carries the post-translational modification 4-hydroxyproline. Residues 19–33 (CVGDDVTSVLTRGEA) constitute a propeptide that is removed on maturation.

Belongs to the MSDIN fungal toxin family. Post-translationally, processed by the macrocyclase-peptidase enzyme POPB to yield a toxic cyclic octapeptide. POPB first removes 10 residues from the N-terminus. Conformational trapping of the remaining peptide forces the enzyme to release this intermediate rather than proceed to macrocyclization. The enzyme rebinds the remaining peptide in a different conformation and catalyzes macrocyclization of the N-terminal 8 residues. As to expression, expressed in basidiocarps.

Major toxin belonging to the bicyclic octapeptides amatoxins that acts by binding non-competitively to RNA polymerase II and greatly slowing the elongation of transcripts from target promoters. In Amanita exitialis (Guangzhou destroying angel), this protein is Alpha-amanitin proprotein 2.